The following is a 167-amino-acid chain: uncharacterized protein (167 aa).

The next 2 membrane-spanning stretches (helical) occupy residues 21–41 (KIGLAIFLIGAFINLIHIYKP) and 87–107 (MIITFILVQTTLITLDLYVFG). Basic and acidic residues predominate over residues 136–159 (RKQRLKEQREKKEQKKEQKKEKKT). The interval 136 to 167 (RKQRLKEQREKKEQKKEQKKEKKTERRKKKKL) is disordered.

It localises to the membrane. This is an uncharacterized protein from Schizosaccharomyces pombe (strain 972 / ATCC 24843) (Fission yeast).